We begin with the raw amino-acid sequence, 161 residues long: Eukaryotic translation initiation factor 5A-2 (161 aa).

Lys54 is modified (hypusine).

This sequence belongs to the eIF-5A family. In terms of processing, lys-54 undergoes hypusination, a unique post-translational modification that consists in the addition of a butylamino group from spermidine to lysine side chain and leads to the formation of a hypusine residue. eIF-5As are the only known proteins to undergo this modification, which is essential for their function. Expressed in the somatic tissues.

Its subcellular location is the cytoplasm. Translation factor that promotes translation elongation and termination, particularly upon ribosome stalling at specific amino acid sequence contexts. Binds between the exit (E) and peptidyl (P) site of the ribosome and promotes rescue of stalled ribosome: specifically required for efficient translation of polyproline-containing peptides as well as other motifs that stall the ribosome. Acts as a ribosome quality control (RQC) cofactor by joining the RQC complex to facilitate peptidyl transfer during CAT tailing step. Acts in somatic tissues and its function in the soma is essential for normal growth and reproduction. This is Eukaryotic translation initiation factor 5A-2 (iff-2) from Caenorhabditis elegans.